The following is a 340-amino-acid chain: Phenylalanine--tRNA ligase alpha subunit (340 aa).

A Mg(2+)-binding site is contributed by E254.

Belongs to the class-II aminoacyl-tRNA synthetase family. Phe-tRNA synthetase alpha subunit type 1 subfamily. In terms of assembly, tetramer of two alpha and two beta subunits. Requires Mg(2+) as cofactor.

Its subcellular location is the cytoplasm. It carries out the reaction tRNA(Phe) + L-phenylalanine + ATP = L-phenylalanyl-tRNA(Phe) + AMP + diphosphate + H(+). The sequence is that of Phenylalanine--tRNA ligase alpha subunit from Caldicellulosiruptor bescii (strain ATCC BAA-1888 / DSM 6725 / KCTC 15123 / Z-1320) (Anaerocellum thermophilum).